Consider the following 181-residue polypeptide: Malignant T-cell-amplified sequence 1-B (181 aa).

Positions 92–171 (LPHQQVDKGA…IGIENIHYLN (80 aa)) constitute a PUA domain.

It belongs to the MCTS1 family.

It is found in the cytoplasm. Its function is as follows. Plays a role as translation enhancer and involved in cell cycle regulation. This is Malignant T-cell-amplified sequence 1-B (mcts1-b) from Xenopus laevis (African clawed frog).